A 57-amino-acid chain; its full sequence is Large ribosomal subunit protein bL32 (57 aa).

Basic residues predominate over residues 1 to 20; the sequence is MAVPKKKTSKAKRDQRRATW. Residues 1 to 24 are disordered; it reads MAVPKKKTSKAKRDQRRATWRRQA.

Belongs to the bacterial ribosomal protein bL32 family.

The sequence is that of Large ribosomal subunit protein bL32 from Gloeothece citriformis (strain PCC 7424) (Cyanothece sp. (strain PCC 7424)).